Reading from the N-terminus, the 314-residue chain is Dihydroorotate dehydrogenase (fumarate) (314 aa).

Residues K46, 70-74 (NSMGL), and N130 each bind substrate. Residue K46 forms a Glycyl lysine isopeptide (Lys-Gly) (interchain with G-Cter in ubiquitin) linkage. An FMN-binding site is contributed by 46-47 (KS). N130 is a binding site for FMN. Residue C133 is the Nucleophile of the active site. Residues K167 and I195 each contribute to the FMN site. 196–197 (NS) provides a ligand contact to substrate. Residues G224, 252-253 (GG), and 274-275 (GT) each bind FMN.

It belongs to the dihydroorotate dehydrogenase family. Type 1 subfamily. In terms of assembly, homodimer. Requires FMN as cofactor.

The protein localises to the cytoplasm. It carries out the reaction (S)-dihydroorotate + fumarate = orotate + succinate. Its pathway is pyrimidine metabolism; UMP biosynthesis via de novo pathway. With respect to regulation, the activity is independent of the presence of oxygen. Functionally, catalyzes the conversion of dihydroorotate to orotate with fumarate as the electron acceptor. Molecular oxygen can replace fumarate in vitro. Does not use oxaloacetate or NAD or NADP as electron acceptors. This chain is Dihydroorotate dehydrogenase (fumarate) (URA1), found in Saccharomyces cerevisiae (strain ATCC 204508 / S288c) (Baker's yeast).